We begin with the raw amino-acid sequence, 259 residues long: Ribonuclease PH (259 aa).

Phosphate contacts are provided by residues Arg-88 and 126–128 (GTR).

This sequence belongs to the RNase PH family. As to quaternary structure, homohexameric ring arranged as a trimer of dimers.

The enzyme catalyses tRNA(n+1) + phosphate = tRNA(n) + a ribonucleoside 5'-diphosphate. In terms of biological role, phosphorolytic 3'-5' exoribonuclease that plays an important role in tRNA 3'-end maturation. Removes nucleotide residues following the 3'-CCA terminus of tRNAs; can also add nucleotides to the ends of RNA molecules by using nucleoside diphosphates as substrates, but this may not be physiologically important. Probably plays a role in initiation of 16S rRNA degradation (leading to ribosome degradation) during starvation. This is Ribonuclease PH from Mycobacterium leprae (strain Br4923).